Reading from the N-terminus, the 558-residue chain is MSILNCRPSFDGVDTDDACCGAMASACCVNTKEDGESPSAGSPSGTPQSLVLEDVQGYDVEFDPPLESKYECPICLMALREAVQTPCGHRFCKACILKSIRDAGHKCPVDNESLMENQLFPDNFAKREILSLRVKCPSQGCTETMELRHLERHLVRCDFAGVECSQCQSSFPKYSLQKHKFEECPRRQIFCENCAVAMALEDKLNHDQTCPLAYVTCEYCQTNLIREQMPAHYSMDCTMAPIPCMYYEFGCTEKMQRNDLARHLQEFTQAHMRMMAQTLRSFSSSVTPTSHMPDISFCDPSQFEPAPPSVATVHSTHTPSQNDCTQETRNLRETIEQLEGRLVRQDHQIRELIAKMETQCTYVNELKHTIRSLDNRLGEMESQQCSGIFIWRINNFNSLLKNQEEERPVVIHSQGFYTGKPGYKLCLRLHLQLPSAQRCANYISLFVHTMQGEYDSLLPWPLQGTIRLSILDQSEGVAMQDQEEVMDTKPELLAFQRPTVARNPKGFGYVTFMHLQALKQRQYVKNDTLLVRCSVTTHLDLISPRREGFQPRSGDGAL.

An RING-type; degenerate zinc finger spans residues 72-111; that stretch reads CPICLMALREAVQTPCGHRFCKACILKSIRDAGHKCPVDN. TRAF-type zinc fingers lie at residues 148–204 and 205–261; these read RHLE…EDKL and NHDQ…NDLA. A coiled-coil region spans residues 321 to 384; the sequence is QNDCTQETRN…NRLGEMESQQ (64 aa). An MATH domain is found at 386–535; it reads SGIFIWRINN…NDTLLVRCSV (150 aa).

Belongs to the TNF receptor-associated factor family. A subfamily. In terms of assembly, homotrimer. Homooligomer.

It localises to the cytoplasm. Its subcellular location is the cell cortex. The protein resides in the nucleus. It is found in the lipid droplet. It carries out the reaction S-ubiquitinyl-[E2 ubiquitin-conjugating enzyme]-L-cysteine + [acceptor protein]-L-lysine = [E2 ubiquitin-conjugating enzyme]-L-cysteine + N(6)-ubiquitinyl-[acceptor protein]-L-lysine.. It participates in protein modification; protein ubiquitination. Its function is as follows. E3 ubiquitin ligase that, together with UBE2N and UBE2V1, mediates the synthesis of 'Lys-63'-linked-polyubiquitin chains conjugated to proteins, such as IKBKG, IRAK1, AKT1 and AKT2. Also mediates ubiquitination of free/unanchored polyubiquitin chain that leads to MAP3K7 activation. This is TNF receptor-associated factor 6 (traf6) from Xenopus tropicalis (Western clawed frog).